The primary structure comprises 84 residues: Anthracycline acyl carrier protein DpsG (84 aa).

The Carrier domain occupies 3 to 80 (ELSLAELREI…SMLIFVNERL (78 aa)). Ser-40 bears the O-(pantetheine 4'-phosphoryl)serine mark.

It participates in antibiotic biosynthesis; daunorubicin biosynthesis. It functions in the pathway antibiotic biosynthesis; carminomycin biosynthesis. Its pathway is antibiotic biosynthesis; rhodomycin biosynthesis. The protein operates within antibiotic biosynthesis; aclacinomycin biosynthesis. Its function is as follows. Involved in the biosynthesis of aklanonate which is an important precursor common to the formation of the clinically significant anthracyclines such as carminomycin, daunorubicin (daunomycin), rhodomycin, aclacinomycin T (aklavin) and aclacinomycin A (aclarubicin). These compounds are aromatic polyketide antibiotics that exhibit high cytotoxicity and are widely applied in the chemotherapy of a variety of cancers. The chain is Anthracycline acyl carrier protein DpsG (dpsG) from Streptomyces peucetius.